A 568-amino-acid polypeptide reads, in one-letter code: Sulfite reductase [NADPH] hemoprotein beta-component (568 aa).

The [4Fe-4S] cluster site is built by cysteine 425, cysteine 431, cysteine 470, and cysteine 474. Cysteine 474 contributes to the siroheme binding site.

It belongs to the nitrite and sulfite reductase 4Fe-4S domain family. In terms of assembly, alpha(8)-beta(8). The alpha component is a flavoprotein, the beta component is a hemoprotein. Siroheme serves as cofactor. [4Fe-4S] cluster is required as a cofactor.

The enzyme catalyses hydrogen sulfide + 3 NADP(+) + 3 H2O = sulfite + 3 NADPH + 4 H(+). Its pathway is sulfur metabolism; hydrogen sulfide biosynthesis; hydrogen sulfide from sulfite (NADPH route): step 1/1. Its function is as follows. Component of the sulfite reductase complex that catalyzes the 6-electron reduction of sulfite to sulfide. This is one of several activities required for the biosynthesis of L-cysteine from sulfate. This is Sulfite reductase [NADPH] hemoprotein beta-component from Xanthomonas campestris pv. campestris (strain ATCC 33913 / DSM 3586 / NCPPB 528 / LMG 568 / P 25).